The primary structure comprises 326 residues: Ribose-phosphate pyrophosphokinase 4 (326 aa).

Mg(2+)-binding residues include aspartate 140, histidine 142, histidine 151, and aspartate 155.

Belongs to the ribose-phosphate pyrophosphokinase family.

The protein localises to the cytoplasm. The catalysed reaction is D-ribose 5-phosphate + ATP = 5-phospho-alpha-D-ribose 1-diphosphate + AMP + H(+). The protein operates within metabolic intermediate biosynthesis; 5-phospho-alpha-D-ribose 1-diphosphate biosynthesis; 5-phospho-alpha-D-ribose 1-diphosphate from D-ribose 5-phosphate (route I): step 1/1. 5-phosphoribose 1-diphosphate synthase involved in nucleotide, histidine, and tryptophan biosynthesis. Active in heteromultimeric complexes with other 5-phosphoribose 1-diphosphate synthases (PRS2, PRS3, PRS4 and PRS5). This Saccharomyces cerevisiae (strain ATCC 204508 / S288c) (Baker's yeast) protein is Ribose-phosphate pyrophosphokinase 4 (PRS4).